Reading from the N-terminus, the 938-residue chain is Protein translocase subunit SecA 1 (938 aa).

Residues Gln84, Gly102–Thr106, and Asp491 each bind ATP. The segment at Gln865–Arg938 is disordered. Residues Thr918–Arg927 show a composition bias toward basic and acidic residues.

It belongs to the SecA family. In terms of assembly, monomer and homodimer. Part of the essential Sec protein translocation apparatus which comprises SecA, SecYEG and auxiliary proteins SecDF. Other proteins may also be involved.

Its subcellular location is the cell membrane. The protein resides in the cytoplasm. It carries out the reaction ATP + H2O + cellular proteinSide 1 = ADP + phosphate + cellular proteinSide 2.. Part of the Sec protein translocase complex. Interacts with the SecYEG preprotein conducting channel. Has a central role in coupling the hydrolysis of ATP to the transfer of proteins into and across the cell membrane, serving as an ATP-driven molecular motor driving the stepwise translocation of polypeptide chains across the membrane. This is Protein translocase subunit SecA 1 from Mycolicibacterium vanbaalenii (strain DSM 7251 / JCM 13017 / BCRC 16820 / KCTC 9966 / NRRL B-24157 / PYR-1) (Mycobacterium vanbaalenii).